We begin with the raw amino-acid sequence, 201 residues long: Protein CIMAP1C (201 aa).

The STPGR repeat unit spans residues 171-186 (PAPTMSSRSGHTSPAR). The segment at 172 to 201 (APTMSSRSGHTSPARLLSPWASSTRPTYAR) is disordered. Residues 191-201 (WASSTRPTYAR) are compositionally biased toward polar residues.

This sequence belongs to the CIMAP family.

The chain is Protein CIMAP1C (CIMAP1C) from Bos taurus (Bovine).